The sequence spans 543 residues: CTP synthase (543 aa).

Positions 1 to 267 are amidoligase domain; sequence MKQTKYIFVT…LSPIAEILDL (267 aa). Serine 15 provides a ligand contact to CTP. A UTP-binding site is contributed by serine 15. ATP-binding positions include 16–21 and aspartate 73; that span reads SLGKGI. Aspartate 73 and glutamate 141 together coordinate Mg(2+). Residues 148 to 150, 188 to 193, and lysine 224 each bind CTP; these read DIE and KTKPTQ. Residues 188–193 and lysine 224 each bind UTP; that span reads KTKPTQ. A Glutamine amidotransferase type-1 domain is found at 292-543; that stretch reads KIAFVGKYVD…IKAAINYEDN (252 aa). Glycine 354 is an L-glutamine binding site. The active-site Nucleophile; for glutamine hydrolysis is cysteine 381. L-glutamine is bound by residues 382 to 385, glutamate 405, and arginine 473; that span reads LGMQ. Catalysis depends on residues histidine 516 and glutamate 518.

The protein belongs to the CTP synthase family. Homotetramer.

It catalyses the reaction UTP + L-glutamine + ATP + H2O = CTP + L-glutamate + ADP + phosphate + 2 H(+). It carries out the reaction L-glutamine + H2O = L-glutamate + NH4(+). The enzyme catalyses UTP + NH4(+) + ATP = CTP + ADP + phosphate + 2 H(+). The protein operates within pyrimidine metabolism; CTP biosynthesis via de novo pathway; CTP from UDP: step 2/2. Allosterically activated by GTP, when glutamine is the substrate; GTP has no effect on the reaction when ammonia is the substrate. The allosteric effector GTP functions by stabilizing the protein conformation that binds the tetrahedral intermediate(s) formed during glutamine hydrolysis. Inhibited by the product CTP, via allosteric rather than competitive inhibition. Functionally, catalyzes the ATP-dependent amination of UTP to CTP with either L-glutamine or ammonia as the source of nitrogen. Regulates intracellular CTP levels through interactions with the four ribonucleotide triphosphates. The protein is CTP synthase of Campylobacter jejuni subsp. jejuni serotype O:6 (strain 81116 / NCTC 11828).